Reading from the N-terminus, the 452-residue chain is Prenyltransferase fsdK (452 aa).

Belongs to the tryptophan dimethylallyltransferase family.

It participates in mycotoxin biosynthesis. In terms of biological role, prenyltransferase; part of the gene cluster that mediates the biosynthesis of fusaridione A, a bright yellow trans-fused decalin-containing tetramic acid with antimicrobial activity. The PKS module of fsdS catalyzes the formation of the polyketide unit which is then conjugated to L-tyrosine by the condensation domain of the fsdS NRPS module. Activity of the Dieckmann cyclase domain (RED) results in release of the intermediate fusaridione A. The unstable pyrrolidinedione ring of fusaridione A is opened through a reverse-Dieckmann reaction to afford its ring-opened form. The sequence is that of Prenyltransferase fsdK from Fusarium heterosporum.